Reading from the N-terminus, the 212-residue chain is MGGTFDPIHYGHLVAASEVADLFGLDQVVFVPSGQPWQKDRHVSAAEDRYLMTVIATASNPRFSVSRVDIDRAGPTYTRDTLRDLHALNPDSELFFITGADALASILSWQGWETLFELAHFVGVSRPGYELRREHITGVLGELPDDALTLVEIPALAISSTDCRQRAAHRRPLWYLMPDGVVQYVSKRRLYRAEPGPAVAVTETSLSTGDHP.

The protein belongs to the NadD family.

The catalysed reaction is nicotinate beta-D-ribonucleotide + ATP + H(+) = deamido-NAD(+) + diphosphate. It functions in the pathway cofactor biosynthesis; NAD(+) biosynthesis; deamido-NAD(+) from nicotinate D-ribonucleotide: step 1/1. In terms of biological role, catalyzes the reversible adenylation of nicotinate mononucleotide (NaMN) to nicotinic acid adenine dinucleotide (NaAD). In Mycobacterium avium (strain 104), this protein is Probable nicotinate-nucleotide adenylyltransferase.